The sequence spans 188 residues: Holliday junction branch migration complex subunit RuvA (188 aa).

The interval 1–64 (MIAGISGRVL…QDGITLYGFS (64 aa)) is domain I. Residues 65-143 (NEMKKELFLS…SAGIKDMRIY (79 aa)) are domain II. A region of interest (flexible linker) is located at residue tyrosine 143. A domain III region spans residues 143–186 (YHESLEALVSLGYPEKQAREAVKQVYREGMKTSELIKEALKFLS).

It belongs to the RuvA family. Homotetramer. Forms an RuvA(8)-RuvB(12)-Holliday junction (HJ) complex. HJ DNA is sandwiched between 2 RuvA tetramers; dsDNA enters through RuvA and exits via RuvB. An RuvB hexamer assembles on each DNA strand where it exits the tetramer. Each RuvB hexamer is contacted by two RuvA subunits (via domain III) on 2 adjacent RuvB subunits; this complex drives branch migration. In the full resolvosome a probable DNA-RuvA(4)-RuvB(12)-RuvC(2) complex forms which resolves the HJ.

The protein resides in the cytoplasm. Functionally, the RuvA-RuvB-RuvC complex processes Holliday junction (HJ) DNA during genetic recombination and DNA repair, while the RuvA-RuvB complex plays an important role in the rescue of blocked DNA replication forks via replication fork reversal (RFR). RuvA specifically binds to HJ cruciform DNA, conferring on it an open structure. The RuvB hexamer acts as an ATP-dependent pump, pulling dsDNA into and through the RuvAB complex. HJ branch migration allows RuvC to scan DNA until it finds its consensus sequence, where it cleaves and resolves the cruciform DNA. Promotes Holliday junction (HJ) branch migration in conjunction with RuvB. This Thermotoga maritima (strain ATCC 43589 / DSM 3109 / JCM 10099 / NBRC 100826 / MSB8) protein is Holliday junction branch migration complex subunit RuvA.